A 354-amino-acid polypeptide reads, in one-letter code: Protein RecA (354 aa).

67-74 provides a ligand contact to ATP; it reads GPESSGKT.

The protein belongs to the RecA family.

The protein localises to the cytoplasm. In terms of biological role, can catalyze the hydrolysis of ATP in the presence of single-stranded DNA, the ATP-dependent uptake of single-stranded DNA by duplex DNA, and the ATP-dependent hybridization of homologous single-stranded DNAs. It interacts with LexA causing its activation and leading to its autocatalytic cleavage. This is Protein RecA from Serratia marcescens.